Reading from the N-terminus, the 398-residue chain is MSIYLTAEVPGTGGVIKATPEDFLVEEIPAYLPSGQGEHCFAVLEKRGIATLEALRRLAKALGVQERDLGYAGMKDAIGITRQTISIPRVAPEKVLALEIPGITVLSASMHGNKLRLGHLKGNRFVIRVRDVAQGAAGNAEAALEIMTRRGVPNRFGVQRYGAQGNTHEIGAAMLRREFKSAVDRLIGDPAAVTDERWRLAIEAYRRGEVAESLALFPGHFRVERELLTRLVQRPDGFERAFNSVQPRMKRLYLSAFQSSLFDLVLGKRLDSFDQVNVGDIAFKHENGACFLVQDLAAEAPRAESFEISPTGPMFGCTMMESHGAQGELEREVLAAQELTLESFNLSGGLRMEGERRPLRVPIAGAEVRQDGSDLLLDFSLPRGAYATCVLSEIMKSD.

The active-site Nucleophile is Asp-76. The region spanning 151 to 361 (GVPNRFGVQR…MEGERRPLRV (211 aa)) is the TRUD domain.

It belongs to the pseudouridine synthase TruD family.

It catalyses the reaction uridine(13) in tRNA = pseudouridine(13) in tRNA. In terms of biological role, responsible for synthesis of pseudouridine from uracil-13 in transfer RNAs. The protein is tRNA pseudouridine synthase D of Geobacter sp. (strain M21).